The chain runs to 675 residues: Rho GTPase-activating protein 40 (675 aa).

2 disordered regions span residues 95 to 118 (RDEL…EAES) and 187 to 218 (KMSS…PGGL). The segment covering 103–116 (SGGNEGQLPEEGEA) has biased composition (acidic residues). The 200-residue stretch at 323–522 (VPLDSLLEAD…IMVHYQDLLW (200 aa)) folds into the Rho-GAP domain.

GTPase activator for the Rho-type GTPases by converting them to an inactive GDP-bound state. This is Rho GTPase-activating protein 40 from Homo sapiens (Human).